The following is a 77-amino-acid chain: Small ribosomal subunit protein bS16 (77 aa).

This sequence belongs to the bacterial ribosomal protein bS16 family.

This is Small ribosomal subunit protein bS16 from Helicobacter hepaticus (strain ATCC 51449 / 3B1).